The sequence spans 549 residues: Thermosome subunit (549 aa).

Over residues 528-538 the composition is skewed to basic and acidic residues; it reads EKEKEGEKGGG. The segment at 528–549 is disordered; sequence EKEKEGEKGGGSEEFSGSSDLD. Residues 540 to 549 are compositionally biased toward low complexity; sequence EEFSGSSDLD.

It belongs to the TCP-1 chaperonin family. As to quaternary structure, forms an oligomeric complex of eight-membered rings.

In terms of biological role, molecular chaperone; binds unfolded polypeptides in vitro, and has a weak ATPase activity. In Pyrococcus horikoshii (strain ATCC 700860 / DSM 12428 / JCM 9974 / NBRC 100139 / OT-3), this protein is Thermosome subunit (ths).